A 413-amino-acid polypeptide reads, in one-letter code: 3-isopropylmalate dehydratase large subunit (413 aa).

The [4Fe-4S] cluster site is built by cysteine 295, cysteine 353, and cysteine 356.

This sequence belongs to the aconitase/IPM isomerase family. LeuC type 2 subfamily. As to quaternary structure, heterodimer of LeuC and LeuD. It depends on [4Fe-4S] cluster as a cofactor.

The enzyme catalyses (2R,3S)-3-isopropylmalate = (2S)-2-isopropylmalate. Its pathway is amino-acid biosynthesis; L-leucine biosynthesis; L-leucine from 3-methyl-2-oxobutanoate: step 2/4. Functionally, catalyzes the isomerization between 2-isopropylmalate and 3-isopropylmalate, via the formation of 2-isopropylmaleate. This chain is 3-isopropylmalate dehydratase large subunit, found in Pyrobaculum calidifontis (strain DSM 21063 / JCM 11548 / VA1).